We begin with the raw amino-acid sequence, 819 residues long: Regulator of G-protein signaling rgs-7 (819 aa).

The segment covering M1–D11 has biased composition (acidic residues). Disordered regions lie at residues M1–W51, G112–S135, and S149–E259. The segment covering Y32–A44 has biased composition (polar residues). Positions G112–V124 are enriched in basic and acidic residues. Residues S149 to A166 show a composition bias toward low complexity. The span at Q173–S185 shows a compositional bias: polar residues. The span at R213–R223 shows a compositional bias: basic residues. The segment covering S234–E259 has biased composition (basic and acidic residues). Positions K290–F429 constitute a C2 domain. 2 disordered regions span residues Y515–G594 and F617–K640. Polar residues-rich tracts occupy residues S517–D533, P559–N568, and F617–Q632. Residues S682–L800 enclose the RGS domain.

In terms of assembly, interacts with egl-30.

Its function is as follows. Inhibits signal transduction by increasing the GTPase activity of G protein alpha subunit egl-30 (G-alpha(q)), thereby driving it into its inactive GDP-bound form. May organize egl-30 into a stable multiprotein signaling complex, and thereby persistently inhibit egl-30 when triggered by calcium or phospholipids. In Caenorhabditis elegans, this protein is Regulator of G-protein signaling rgs-7 (rgs-7).